A 415-amino-acid chain; its full sequence is Multidrug resistance protein MdtA (415 aa).

An N-terminal signal peptide occupies residues 1-21; sequence MKGSYKSRWVIVIVVVIAAIA. Disordered regions lie at residues 32–60 and 392–415; these read SRSAAPGATKQAQQSPASGRRGMRSGPLA and EAQSATTPEEKATSREYAKKGARS. Positions 399–415 are enriched in basic and acidic residues; it reads PEEKATSREYAKKGARS.

Belongs to the membrane fusion protein (MFP) (TC 8.A.1) family. Part of a tripartite efflux system composed of MdtA, MdtB and MdtC.

It localises to the cell inner membrane. In terms of biological role, the MdtABC tripartite complex confers resistance against novobiocin and deoxycholate. The protein is Multidrug resistance protein MdtA of Escherichia coli O81 (strain ED1a).